The chain runs to 274 residues: Undecaprenyl-diphosphatase 1 (274 aa).

7 helical membrane-spanning segments follow: residues 47 to 67 (QVFL…LYFN), 85 to 105 (VSMW…GIPF), 113 to 133 (FYNY…FIMI), 150 to 170 (ITYT…VFPG), 196 to 216 (FFLA…KFGL), 225 to 245 (ILFI…KFLM), and 253 to 273 (FKAF…YFLI).

This sequence belongs to the UppP family.

It is found in the cell membrane. The catalysed reaction is di-trans,octa-cis-undecaprenyl diphosphate + H2O = di-trans,octa-cis-undecaprenyl phosphate + phosphate + H(+). Its function is as follows. Catalyzes the dephosphorylation of undecaprenyl diphosphate (UPP). Confers resistance to bacitracin. The sequence is that of Undecaprenyl-diphosphatase 1 from Clostridium acetobutylicum (strain ATCC 824 / DSM 792 / JCM 1419 / IAM 19013 / LMG 5710 / NBRC 13948 / NRRL B-527 / VKM B-1787 / 2291 / W).